The chain runs to 508 residues: Serine/threonine protein kinase OSK3 (508 aa).

Positions 17–269 constitute a Protein kinase domain; sequence YNLGRTLGIG…IREIREHQWF (253 aa). ATP is bound by residues 23–31 and K46; that span reads LGIGSFGKV. The Proton acceptor role is filled by D140. One can recognise a UBA domain in the interval 290-330; sequence MIDEDTLQDVVNLGYGKDHVCESLRNRLQNEATVAYYLLLD. One can recognise a KA1 domain in the interval 459–507; sequence NGRLPAVIKFEIQLYKTRDEKYLLDMQRVTGPQLLFLDFCADFLTKLRV.

The protein belongs to the protein kinase superfamily. Ser/Thr protein kinase family. As to quaternary structure, interacts with HDR1. Strongly expressed in immature seeds. Mostly expressed in panicles, and to a lower extent, in leaf sheaths.

Its subcellular location is the nucleus. The enzyme catalyses L-seryl-[protein] + ATP = O-phospho-L-seryl-[protein] + ADP + H(+). The catalysed reaction is L-threonyl-[protein] + ATP = O-phospho-L-threonyl-[protein] + ADP + H(+). In Oryza sativa subsp. indica (Rice), this protein is Serine/threonine protein kinase OSK3.